A 395-amino-acid polypeptide reads, in one-letter code: MDPTKAPDFKPPQPNEELQPPPDPTHTIPKSGPIVPYVLADYNSSIDAPFNLDIYKTLSSRKKNANSSNRMDHIPLNTSDFQPLSRDVSSEEESEGQSNGIDATLQDVTMTGNLGVLKSQIADLEEVPHTIVRQARTIEDYEFPVHRLTKKLQDPEKLPLIIVACGSFSPITYLHLRMFEMALDDINEQTRFEVVGGYFSPVSDNYQKRGLAPAYHRVRMCELACERTSSWLMVDAWESLQSSYTRTAKVLDHFNHEINIKRGGIMTVDGEKMGVKIMLLAGGDLIESMGEPHVWADSDLHHILGNYGCLIVERTGSDVRSFLLSHDIMYEHRRNILIIKQLIYNDISSTKVRLFIRRGMSVQYLLPNSVIRYIQEYNLYINQSEPVKQVLDSKE.

Disordered regions lie at residues 1-34 (MDPT…SGPI) and 62-102 (KKNA…NGID). Residues 9–24 (FKPPQPNEELQPPPDP) show a composition bias toward pro residues. S85, S89, and S90 each carry phosphoserine. NAD(+) is bound by residues S167 and F168. Residues H175 and R209 each contribute to the ATP site. Residues T247, G282, D284, W295, R314, and N345 each coordinate NAD(+). 350 to 353 (TKVR) is a binding site for ATP.

It belongs to the eukaryotic NMN adenylyltransferase family. Co(2+) serves as cofactor.

It localises to the nucleus. It carries out the reaction beta-nicotinamide D-ribonucleotide + ATP + H(+) = diphosphate + NAD(+). The catalysed reaction is nicotinate beta-D-ribonucleotide + ATP + H(+) = deamido-NAD(+) + diphosphate. Its pathway is cofactor biosynthesis; NAD(+) biosynthesis; deamido-NAD(+) from nicotinate D-ribonucleotide: step 1/1. It functions in the pathway cofactor biosynthesis; NAD(+) biosynthesis; NAD(+) from nicotinamide D-ribonucleotide: step 1/1. In terms of biological role, catalyzes the formation of NAD(+) from nicotinamide mononucleotide (NMN) and ATP. Can also use the deamidated form; nicotinic acid mononucleotide (NaMN) as substrate to form deamido-NAD(+) (NaAD). Key enzyme in both de novo and salvage pathways for NAD(+) biosynthesis. Predominantly acts in the salvage pathways via NMN. In Saccharomyces cerevisiae (strain ATCC 204508 / S288c) (Baker's yeast), this protein is Nicotinamide/nicotinic acid mononucleotide adenylyltransferase 2.